A 109-amino-acid chain; its full sequence is Arminin 6560 (109 aa).

Residues 1 to 21 form the signal peptide; it reads MKCLFGFLFIMLVAFLQDVHG. The propeptide occupies 22-77; that stretch reads VDSCIGKPCKVKGEDMKDIKEKKIEDIKEEIKNVKKEIFEDVDDELLDDNIRDDKI. I106 bears the Isoleucine amide mark.

Belongs to the arminin family. In terms of tissue distribution, expressed in the ectodermal epithelium.

It is found in the secreted. It localises to the target cell membrane. Its function is as follows. Antimicrobial peptide with a broad-spectrum antimicrobial activity. Keeps its antibacterial activity under a wide range of salt concentrations that mimic physiological conditions of human blood, which is surprising, since Hydra is an obligate freshwater animal with nearly no salt tolerance. Does not affect red blood cells. This chain is Arminin 6560, found in Hydra vulgaris (Hydra).